The following is a 160-amino-acid chain: NAD(P)H-quinone oxidoreductase subunit I, chloroplastic (160 aa).

2 consecutive 4Fe-4S ferredoxin-type domains span residues 55–84 and 95–124; these read GRIH…VDWK and LNYS…MTEE. [4Fe-4S] cluster-binding residues include C64, C67, C70, C74, C104, C107, C110, and C114.

Belongs to the complex I 23 kDa subunit family. NDH is composed of at least 16 different subunits, 5 of which are encoded in the nucleus. [4Fe-4S] cluster is required as a cofactor.

It localises to the plastid. It is found in the chloroplast thylakoid membrane. It catalyses the reaction a plastoquinone + NADH + (n+1) H(+)(in) = a plastoquinol + NAD(+) + n H(+)(out). The catalysed reaction is a plastoquinone + NADPH + (n+1) H(+)(in) = a plastoquinol + NADP(+) + n H(+)(out). Functionally, NDH shuttles electrons from NAD(P)H:plastoquinone, via FMN and iron-sulfur (Fe-S) centers, to quinones in the photosynthetic chain and possibly in a chloroplast respiratory chain. The immediate electron acceptor for the enzyme in this species is believed to be plastoquinone. Couples the redox reaction to proton translocation, and thus conserves the redox energy in a proton gradient. This Cucumis sativus (Cucumber) protein is NAD(P)H-quinone oxidoreductase subunit I, chloroplastic.